Consider the following 608-residue polypeptide: DNA mismatch repair protein MutL (608 aa).

It belongs to the DNA mismatch repair MutL/HexB family.

Its function is as follows. This protein is involved in the repair of mismatches in DNA. It is required for dam-dependent methyl-directed DNA mismatch repair. May act as a 'molecular matchmaker', a protein that promotes the formation of a stable complex between two or more DNA-binding proteins in an ATP-dependent manner without itself being part of a final effector complex. In Elusimicrobium minutum (strain Pei191), this protein is DNA mismatch repair protein MutL.